The sequence spans 86 residues: Dolichyl-diphosphooligosaccharide--protein glycosyltransferase subunit OST5 (86 aa).

The Lumenal portion of the chain corresponds to 2–27 (TYEQLYKEFHSSKSFQPFIHLDTQPK). A helical transmembrane segment spans residues 28–48 (FAICGLIVTLAVLSSALFAVG). At 49–56 (SKSSYIKK) the chain is on the cytoplasmic side. The chain crosses the membrane as a helical span at residues 57-77 (LFFYTILSVIGSLFAGLTTVF). Residues 78 to 86 (ASNSFGVYV) lie on the Lumenal side of the membrane.

It belongs to the OST5 family. As to quaternary structure, component of the oligosaccharyltransferase (OST) complex, which appears to exist in two assemblies comprising OST1, OST2, OST4, OST5, STT3, SWP1, WPB1, and either OST3 or OST6. OST assembly occurs through the formation of 3 subcomplexes. Subcomplex 1 contains OST1 and OST5, subcomplex 2 contains STT3, OST3, and OST4, and subcomplex 3 contains OST2, WBP1, and SWP1.

The protein resides in the endoplasmic reticulum membrane. It participates in protein modification; protein glycosylation. Subunit of the oligosaccharyl transferase (OST) complex that catalyzes the initial transfer of a defined glycan (Glc(3)Man(9)GlcNAc(2) in eukaryotes) from the lipid carrier dolichol-pyrophosphate to an asparagine residue within an Asn-X-Ser/Thr consensus motif in nascent polypeptide chains, the first step in protein N-glycosylation. N-glycosylation occurs cotranslationally and the complex associates with the Sec61 complex at the channel-forming translocon complex that mediates protein translocation across the endoplasmic reticulum (ER). All subunits are required for a maximal enzyme activity. This Saccharomyces cerevisiae (strain ATCC 204508 / S288c) (Baker's yeast) protein is Dolichyl-diphosphooligosaccharide--protein glycosyltransferase subunit OST5 (OST5).